Here is a 119-residue protein sequence, read N- to C-terminus: Holo-[acyl-carrier-protein] synthase (119 aa).

Mg(2+) contacts are provided by D8 and E58.

It belongs to the P-Pant transferase superfamily. AcpS family. The cofactor is Mg(2+).

Its subcellular location is the cytoplasm. It catalyses the reaction apo-[ACP] + CoA = holo-[ACP] + adenosine 3',5'-bisphosphate + H(+). In terms of biological role, transfers the 4'-phosphopantetheine moiety from coenzyme A to a Ser of acyl-carrier-protein. This Bacillus cereus (strain G9842) protein is Holo-[acyl-carrier-protein] synthase.